Here is a 781-residue protein sequence, read N- to C-terminus: MAKTPSDHLLSTLEELVPYDFEKFKFKLQNTSVQKEHSRIPRSQIQRARPVKMATLLVTYYGEEYAVQLTLQVLRAINQRLLAEELHRAAIQEYSTQENGTDDSAASSSLGENKPRSLKTPDHPEGNEGNGPRPYGGGAASLRCSQPEAGRGLSRKPLSKRREKASEGLDAQGKPRTRSPALPGGRSPGPCRALEGGQAEVRLRRNASSAGRLQGLAGGAPGQKECRPFEVYLPSGKMRPRSLEVTISTGEKAPANPEILLTLEEKTAANLDSATEPRARPTPDGGASADLKEGPGNPEHSVTGRPPDTAASPRCHAQEGDPVDGTCVRDSCSFPEAVSGHPQASGSRSPGCPRCQDSHERKSPGSLSPQPLPQCKRHLKQVQLLFCEDHDEPICLICSLSQEHQGHRVRPIEEVALEHKKKIQKQLEHLKKLRKSGEEQRSYGEEKAVSFLKQTEALKQRVQRKLEQVYYFLEQQEHFFVASLEDVGQMVGQIRKAYDTRVSQDIALLDALIGELEAKECQSEWELLQDIGDILHRAKTVPVPEKWTTPQEIKQKIQLLHQKSEFVEKSTKYFSETLRSEMEMFNVPELIGAQAHAVNVILDAETAYPNLIFSDDLKSVRLGNKWERLPDGPQRFDSCIIVLGSPSFLSGRRYWEVEVGDKTAWILGACKTSISRKGNMTLSPENGYWVVIMMKENEYQASSVPPTRLLIKEPPKRVGIFVDYRVGSISFYNVTARSHIYTFASCSFSGPLQPIFSPGTRDGGKNTAPLTICPVGGQGPD.

A Pyrin domain is found at methionine 1 to glutamine 92. Over residues glutamate 93–glycine 111 the composition is skewed to polar residues. The interval glutamate 93–cysteine 226 is disordered. Residues asparagine 113–glycine 126 are compositionally biased toward basic and acidic residues. The segment covering leucine 153–glutamate 163 has biased composition (basic residues). Serine 242 bears the Phosphoserine mark. An interaction with RELA region spans residues lysine 266–arginine 280. 2 disordered regions span residues asparagine 270 to proline 322 and glutamate 336 to proline 373. Residues glutamine 370–isoleucine 412 form a B box-type zinc finger. Residues glutamate 413–serine 442 are a coiled coil. Positions lysine 420–glycine 437 match the Nuclear localization signal motif. The interval lysine 420 to methionine 582 is required for homotrimerization and induction of pyroptosomes. Residues serine 580–valine 775 form the B30.2/SPRY domain.

Homotrimer. Interacts (via the B box-type zinc finger) with PSTPIP1. Interacts (via the B30.2/SPRY domain) with several components of the inflammasome complex, including CASP1 p20 and p10 subunits, CASP5, PYCARD, NLRP1, NLRP2 and NLRP3, as well as with unprocessed IL1B; this interaction may lead to autophagic degradation of these proteins. Component of the AIM2 PANoptosome complex, a multiprotein complex that drives inflammatory cell death (PANoptosis). Interacts with NFKBIA and RELA. Interacts weakly with VASP and ACTR3. Interacts with active ULK1 (phosphorylated on 'Ser-317') and BECN1 simultaneously. Also interacts with ATG16L1 (via WD repeats), and with ATG8 family members, including GABARAP, GABARAPL1 and, to a lesser extent, GABARAPL2, MAP1LC3A/LC3A and MAP1LC3C/LC3C. Interacts with TRIM21. Interacts with YWHAB, YWHAE, YWHAG, YWHAH, YWHAQ and YWHAZ; the interaction is required for the down-regulation of pyrin pro-inflammatory activity. Post-translationally, cleaved by CASP1. The N-terminal cleavage product localizes to the nucleus as a filamentous network and to the cytoplasm, interacts more strongly with RELA and NFKBIA than the full-length protein, enhances the nuclear localization of RELA and induces NFKBIA proteolysis. The C-terminal cleavage product localizes to the cytoplasm. In terms of processing, phosphorylation at Ser-242 is required for the interaction with 14-3-3 proteins and down-regulation of pyrin pro-inflammatory activity. Degraded along with the delivery of its substrates to autolysosomal compartments (at protein level). As to expression, expressed in peripheral blood leukocytes, particularly in mature granulocytes and to a lesser extent in monocytes but not in lymphocytes. Detected in spleen, lung and muscle, probably as a result of leukocyte infiltration in these tissues. Not expressed in thymus, prostate, testis, ovary, small intestine, colon, heart, brain, placenta, liver, kidney, pancreas. Expression detected in several myeloid leukemic, colon cancer, and prostate cancer cell lines.

Its subcellular location is the cytoplasm. The protein resides in the cytoskeleton. It localises to the cell projection. It is found in the ruffle. The protein localises to the lamellipodium. Its subcellular location is the nucleus. The protein resides in the cytoplasmic vesicle. It localises to the autophagosome. Involved in the regulation of innate immunity and the inflammatory response in response to IFNG/IFN-gamma. Organizes autophagic machinery by serving as a platform for the assembly of ULK1, Beclin 1/BECN1, ATG16L1, and ATG8 family members and recognizes specific autophagy targets, thus coordinating target recognition with assembly of the autophagic apparatus and initiation of autophagy. Acts as an autophagy receptor for the degradation of several inflammasome components, including CASP1, NLRP1 and NLRP3, hence preventing excessive IL1B- and IL18-mediated inflammation. However, it can also have a positive effect in the inflammatory pathway, acting as an innate immune sensor that triggers PYCARD/ASC specks formation, caspase-1 activation, and IL1B and IL18 production. Together with AIM2, also acts as a mediator of pyroptosis, necroptosis and apoptosis (PANoptosis), an integral part of host defense against pathogens, in response to bacterial infection. It is required for PSTPIP1-induced PYCARD/ASC oligomerization and inflammasome formation. Recruits PSTPIP1 to inflammasomes, and is required for PSTPIP1 oligomerization. The polypeptide is Pyrin (Homo sapiens (Human)).